The following is an 88-amino-acid chain: Large ribosomal subunit protein bL27 (88 aa).

A disordered region spans residues 1 to 21 (MAHKKAGGSSRNGRDSDGRRL).

The protein belongs to the bacterial ribosomal protein bL27 family.

This Methylobacterium nodulans (strain LMG 21967 / CNCM I-2342 / ORS 2060) protein is Large ribosomal subunit protein bL27.